We begin with the raw amino-acid sequence, 180 residues long: Large ribosomal subunit protein uL6 (180 aa).

It belongs to the universal ribosomal protein uL6 family. As to quaternary structure, part of the 50S ribosomal subunit.

In terms of biological role, this protein binds to the 23S rRNA, and is important in its secondary structure. It is located near the subunit interface in the base of the L7/L12 stalk, and near the tRNA binding site of the peptidyltransferase center. The polypeptide is Large ribosomal subunit protein uL6 (Borrelia duttonii (strain Ly)).